Consider the following 731-residue polypeptide: Gelsolin (731 aa).

The segment at 2–125 (VVEHPEFLKA…YKKGGVASGF (124 aa)) is actin-severing. Residues 25–107 (FDLVPVPPNL…VQGFESATFL (83 aa)) form a Gelsolin-like 1 repeat. Phosphotyrosine is present on Tyr35. The Ca(2+) site is built by Gly41, Asp42, Glu73, Asp85, Gly90, and Ala92. The tract at residues 72-75 (DESG) is actin-actin interfilament contact point. 111 to 118 (KSGLKYKK) provides a ligand contact to a 1,2-diacyl-sn-glycero-3-phospho-(1D-myo-inositol-4,5-bisphosphate). Val121 is a binding site for Ca(2+). 137 to 145 (RLFQVKGRR) contributes to the a 1,2-diacyl-sn-glycero-3-phospho-(1D-myo-inositol-4,5-bisphosphate) binding site. The stretch at 147–219 (VRATEVPVSW…SEEGAEPEAM (73 aa)) is one Gelsolin-like 2 repeat. The Ca(2+) site is built by Gly162 and Asp163. A disulfide bridge links Cys164 with Cys177. Position 185 (Glu185) interacts with Ca(2+). Positions 197 to 211 (RDNERSGRARVHVSE) are enriched in basic and acidic residues. Residues 197–216 (RDNERSGRARVHVSEEGAEP) are disordered. Asp235, Glu278, Asp279, and Glu303 together coordinate Ca(2+). The stretch at 266–338 (DENPFAQGAL…LPEGGETPLF (73 aa)) is one Gelsolin-like 3 repeat. A phosphotyrosine mark is found at Tyr358 and Tyr414. An actin-binding, Ca-sensitive region spans residues 383-731 (AAQHGMDDDG…LDRALAELAA (349 aa)). One copy of the Gelsolin-like 4 repeat lies at 404 to 485 (SDKVPVDPAT…VQGKEPAHLM (82 aa)). Residues Gly420, Asp421, Glu451, Asp463, Gly468, Pro470, and Thr500 each contribute to the Ca(2+) site. One copy of the Gelsolin-like 5 repeat lies at 527–591 (AVEVMPKAGA…AEGSEPDSFW (65 aa)). Lys533 is modified (N6-acetyllysine). Residues Asn540 and Asp541 each contribute to the Ca(2+) site. Phosphotyrosine is present on Tyr552. Glu563 lines the Ca(2+) pocket. Tyr600 bears the Phosphotyrosine mark. Residues 630–705 (IEEVPGELMQ…VKQGFEPPSF (76 aa)) form a Gelsolin-like 6 repeat. Asp645, Asp646, and Glu668 together coordinate Ca(2+). Thr691 is modified (phosphothreonine).

It belongs to the villin/gelsolin family. In terms of assembly, binds to actin and to fibronectin. Identified in a complex composed of ACTA1, COBL, GSN and TMSB4X. Interacts with the inactive form of EIF2AK2/PKR. Interacts with FLII.

The protein localises to the cytoplasm. Its subcellular location is the cytoskeleton. Calcium-regulated, actin-modulating protein that binds to the plus (or barbed) ends of actin monomers or filaments, preventing monomer exchange (end-blocking or capping). It can promote the assembly of monomers into filaments (nucleation) as well as sever filaments already formed. Plays a role in ciliogenesis. The protein is Gelsolin (GSN) of Bos taurus (Bovine).